Consider the following 479-residue polypeptide: Caspase-8 (479 aa).

The propeptide occupies 1–216 (MDFSRNLYDI…TISDSPREQD (216 aa)). 2 consecutive DED domains span residues 2–80 (DFSR…TYLN) and 100–177 (AYRV…IIND). 2 positions are modified to phosphoserine: Ser-188 and Ser-211. N6-acetyllysine is present on Lys-224. His-317 is an active-site residue. The residue at position 334 (Tyr-334) is a Phosphotyrosine. Residue Cys-360 is part of the active site. Residues 375-384 (SEEQPYLEMD) constitute a propeptide that is removed on maturation. At Tyr-380 the chain carries Phosphotyrosine; by SRC. At Ser-387 the chain carries Phosphoserine; by CDK1. At Arg-413 the chain carries (Microbial infection) ADP-riboxanated arginine.

Belongs to the peptidase C14A family. In terms of assembly, heterotetramer that consists of two anti-parallel arranged heterodimers, each one formed by a 18 kDa (p18) and a 10 kDa (p10) subunit. Component of the death-induced signaling complex (DISC) composed of cell surface receptor FAS/CD95 or TNFRSF1A, adapter protein FADD and the CASP8 protease; recruitment of CASP8 to the complex is required for processing of CASP8 into the p18 and p10 subunits. Component of the AIM2 PANoptosome complex, a multiprotein complex that drives inflammatory cell death (PANoptosis). Interacts with CFLAR and PEA15. Interacts with TNFAIP8L2. Interacts with CASP8AP2. Interacts with RFFL and RNF34; negatively regulate CASP8 through proteasomal degradation. Interacts with NOL3; decreases CASP8 activity in a mitochondria localization- and phosphorylation-dependent manner and this interaction is dissociated by calcium. Interacts with UBR2ca. Interacts with RIPK1. Interacts with stimulated TNFRSF10B; this interaction is followed by CASP8 proteolytic cleavage and activation. Interacts (phosphorylated on Tyr-380) with PIK3R1. As to quaternary structure, interacts at the endoplasmic reticulum with a complex containing BCAP31, BAP29, BCL2 and/or BCL2L1. (Microbial infection) Interacts with human cytomegalovirus/HHV-5 protein vICA/UL36; this interaction inhibits CASP8 activation. In terms of assembly, (Microbial infection) Interacts with NleF from pathogenic E.coli. As to quaternary structure, (Microbial infection) Interacts with molluscum contagiosum virus protein MC160. (Microbial infection) Interacts (via RIP homotypic interaction motif) with herpes simplex virus 1/HHV-1 protein RIR1/ICP6 (via RIP homotypic interaction motif); this interaction prevents necroptosis activation. In terms of assembly, (Microbial infection) Interacts (via RIP homotypic interaction motif) with herpes simplex virus 2/HHV-2 protein RIR1/ICP10 (via RIP homotypic interaction motif); this interaction prevents necroptosis activation. Generation of the p10 and p18 subunits requires association with the death-inducing signaling complex (DISC), whereas additional processing is likely due to the autocatalytic activity of the activated protease. GZMB and CASP10 can be involved in these processing events. In terms of processing, phosphorylation on Ser-387 during mitosis by CDK1 inhibits activation by proteolysis and prevents apoptosis. Phosphorylation on Tyr-380 by SRC is mediated by interaction with the SRC SH2 domain and does not affect dimerization or recruitment to the death-inducing signaling complex (DISC) but negatively regulates DISC-mediated processing and activation of CASP8, down-regulating its proapoptotic function. Phosphorylation on Tyr-380 also enhances localization to lamellipodia in migrating cells. Post-translationally, (Microbial infection) ADP-riboxanation by C.violaceum CopC blocks CASP8 processing, preventing CASP8 activation and ability to mediate extrinsic apoptosis. (Microbial infection) Proteolytically cleaved by the cowpox virus CRMA death inhibitory protein. As to expression, isoform 1, isoform 5 and isoform 7 are expressed in a wide variety of tissues. Highest expression in peripheral blood leukocytes, spleen, thymus and liver. Barely detectable in brain, testis and skeletal muscle.

It localises to the cytoplasm. The protein resides in the nucleus. It is found in the cell projection. The protein localises to the lamellipodium. It carries out the reaction Strict requirement for Asp at position P1 and has a preferred cleavage sequence of (Leu/Asp/Val)-Glu-Thr-Asp-|-(Gly/Ser/Ala).. CASP8 activity is restricted by RIPK1. Inhibited by the effector protein NleF that is produced by pathogenic E.coli; this inhibits apoptosis. Functionally, thiol protease that plays a key role in programmed cell death by acting as a molecular switch for apoptosis, necroptosis and pyroptosis, and is required to prevent tissue damage during embryonic development and adulthood. Initiator protease that induces extrinsic apoptosis by mediating cleavage and activation of effector caspases responsible for FAS/CD95-mediated and TNFRSF1A-induced cell death. Cleaves and activates effector caspases CASP3, CASP4, CASP6, CASP7, CASP9 and CASP10. Binding to the adapter molecule FADD recruits it to either receptor FAS/TNFRSF6 or TNFRSF1A. The resulting aggregate called the death-inducing signaling complex (DISC) performs CASP8 proteolytic activation. The active dimeric enzyme is then liberated from the DISC and free to activate downstream apoptotic proteases. Proteolytic fragments of the N-terminal propeptide (termed CAP3, CAP5 and CAP6) are likely retained in the DISC. In addition to extrinsic apoptosis, also acts as a negative regulator of necroptosis: acts by cleaving RIPK1 at 'Asp-324', which is crucial to inhibit RIPK1 kinase activity, limiting TNF-induced apoptosis, necroptosis and inflammatory response. Also able to initiate pyroptosis by mediating cleavage and activation of gasdermin-C and -D (GSDMC and GSDMD, respectively): gasdermin cleavage promotes release of the N-terminal moiety that binds to membranes and forms pores, triggering pyroptosis. Initiates pyroptosis following inactivation of MAP3K7/TAK1. Also acts as a regulator of innate immunity by mediating cleavage and inactivation of N4BP1 downstream of TLR3 or TLR4, thereby promoting cytokine production. May participate in the Granzyme B (GZMB) cell death pathways. Cleaves PARP1 and PARP2. Independent of its protease activity, promotes cell migration following phosphorylation at Tyr-380. Its function is as follows. Lacks the catalytic site and may interfere with the pro-apoptotic activity of the complex. Lacks the catalytic site and may interfere with the pro-apoptotic activity of the complex. Acts as an inhibitor of the caspase cascade. This is Caspase-8 from Homo sapiens (Human).